A 191-amino-acid chain; its full sequence is Protein GrpE (191 aa).

The span at 1-10 shows a compositional bias: basic and acidic residues; that stretch reads MNHEEQKVET. The segment at 1–28 is disordered; the sequence is MNHEEQKVETMEQVEAQPVEPTDVDSEV.

The protein belongs to the GrpE family. In terms of assembly, homodimer.

The protein resides in the cytoplasm. Functionally, participates actively in the response to hyperosmotic and heat shock by preventing the aggregation of stress-denatured proteins, in association with DnaK and GrpE. It is the nucleotide exchange factor for DnaK and may function as a thermosensor. Unfolded proteins bind initially to DnaJ; upon interaction with the DnaJ-bound protein, DnaK hydrolyzes its bound ATP, resulting in the formation of a stable complex. GrpE releases ADP from DnaK; ATP binding to DnaK triggers the release of the substrate protein, thus completing the reaction cycle. Several rounds of ATP-dependent interactions between DnaJ, DnaK and GrpE are required for fully efficient folding. The sequence is that of Protein GrpE from Aeromonas salmonicida (strain A449).